A 197-amino-acid polypeptide reads, in one-letter code: GTP cyclohydrolase-2 (197 aa).

50–54 (RIHSE) is a GTP binding site. Cys55, Cys66, and Cys68 together coordinate Zn(2+). GTP contacts are provided by residues Gln71, 93–95 (EGR), and Thr115. Asp127 (proton acceptor) is an active-site residue. The active-site Nucleophile is the Arg129. Residues Thr150 and Lys155 each contribute to the GTP site.

Belongs to the GTP cyclohydrolase II family. It depends on Zn(2+) as a cofactor.

It carries out the reaction GTP + 4 H2O = 2,5-diamino-6-hydroxy-4-(5-phosphoribosylamino)-pyrimidine + formate + 2 phosphate + 3 H(+). Its pathway is cofactor biosynthesis; riboflavin biosynthesis; 5-amino-6-(D-ribitylamino)uracil from GTP: step 1/4. Its function is as follows. Catalyzes the conversion of GTP to 2,5-diamino-6-ribosylamino-4(3H)-pyrimidinone 5'-phosphate (DARP), formate and pyrophosphate. The protein is GTP cyclohydrolase-2 of Neisseria meningitidis serogroup C (strain 053442).